A 481-amino-acid chain; its full sequence is Ribosomal protein uS12 methylthiotransferase RimO (481 aa).

An MTTase N-terminal domain is found at 38-148 (NRIGFVSLGC…VLKHVHKYVP (111 aa)). Cys-47, Cys-83, Cys-112, Cys-180, Cys-184, and Cys-187 together coordinate [4Fe-4S] cluster. The 238-residue stretch at 166–403 (LTPKHYAYLK…MEVQAEISAE (238 aa)) folds into the Radical SAM core domain. Positions 406 to 472 (ARFVGRTMDI…EHDLWAELVD (67 aa)) constitute a TRAM domain.

Belongs to the methylthiotransferase family. RimO subfamily. Requires [4Fe-4S] cluster as cofactor.

It localises to the cytoplasm. It catalyses the reaction L-aspartate(89)-[ribosomal protein uS12]-hydrogen + (sulfur carrier)-SH + AH2 + 2 S-adenosyl-L-methionine = 3-methylsulfanyl-L-aspartate(89)-[ribosomal protein uS12]-hydrogen + (sulfur carrier)-H + 5'-deoxyadenosine + L-methionine + A + S-adenosyl-L-homocysteine + 2 H(+). Functionally, catalyzes the methylthiolation of an aspartic acid residue of ribosomal protein uS12. This is Ribosomal protein uS12 methylthiotransferase RimO from Shewanella oneidensis (strain ATCC 700550 / JCM 31522 / CIP 106686 / LMG 19005 / NCIMB 14063 / MR-1).